A 333-amino-acid chain; its full sequence is Protoheme IX farnesyltransferase (333 aa).

7 consecutive transmembrane segments (helical) span residues 64-84 (LICT…LNCL), 110-130 (TVFL…VSGV), 133-153 (LAAG…TVIL), 161-181 (IVFG…AATG), 189-209 (WLFG…AILL), 246-266 (IMGV…LLPF), and 287-307 (AKSL…LLLI).

It belongs to the UbiA prenyltransferase family. Protoheme IX farnesyltransferase subfamily.

The protein resides in the cell inner membrane. It catalyses the reaction heme b + (2E,6E)-farnesyl diphosphate + H2O = Fe(II)-heme o + diphosphate. It functions in the pathway porphyrin-containing compound metabolism; heme O biosynthesis; heme O from protoheme: step 1/1. Functionally, converts heme B (protoheme IX) to heme O by substitution of the vinyl group on carbon 2 of heme B porphyrin ring with a hydroxyethyl farnesyl side group. The protein is Protoheme IX farnesyltransferase of Prochlorococcus marinus (strain MIT 9215).